We begin with the raw amino-acid sequence, 265 residues long: Ribosomal RNA small subunit methyltransferase A (265 aa).

6 residues coordinate S-adenosyl-L-methionine: N13, L15, G39, E59, D87, and N108.

Belongs to the class I-like SAM-binding methyltransferase superfamily. rRNA adenine N(6)-methyltransferase family. RsmA subfamily.

The protein resides in the cytoplasm. The catalysed reaction is adenosine(1518)/adenosine(1519) in 16S rRNA + 4 S-adenosyl-L-methionine = N(6)-dimethyladenosine(1518)/N(6)-dimethyladenosine(1519) in 16S rRNA + 4 S-adenosyl-L-homocysteine + 4 H(+). Specifically dimethylates two adjacent adenosines (A1518 and A1519) in the loop of a conserved hairpin near the 3'-end of 16S rRNA in the 30S particle. May play a critical role in biogenesis of 30S subunits. The polypeptide is Ribosomal RNA small subunit methyltransferase A (Aliarcobacter butzleri (strain RM4018) (Arcobacter butzleri)).